A 347-amino-acid polypeptide reads, in one-letter code: Gibberellin 3-beta-dioxygenase 2 (347 aa).

Residues 197 to 301 (DFQGTQAVIQ…RFSMAYLWGP (105 aa)) enclose the Fe2OG dioxygenase domain. Residues histidine 225, aspartate 227, and histidine 282 each coordinate Fe cation. The active site involves arginine 292. Arginine 292 serves as a coordination point for 2-oxoglutarate.

This sequence belongs to the iron/ascorbate-dependent oxidoreductase family. GA3OX subfamily. L-ascorbate is required as a cofactor. It depends on Fe(2+) as a cofactor. Highly expressed in seedlings but also expressed in roots, leaves, stems, flowers, siliques and seeds. Detected predominantly in the hypocotyl and roots of young seedlings and in the petioles and vasculature of leaves. Not expressed in the shoot apical meristem, but found in the elongation zone, the quiescent center cells and the columella cells of the root tips. Found in the cortex and the endodermis of the embryo axis in germinating seeds.

The enzyme catalyses gibberellin A20 + 2-oxoglutarate + O2 = gibberellin A1 + succinate + CO2. It functions in the pathway plant hormone biosynthesis; gibberellin biosynthesis. Functionally, converts the inactive gibberellin (GA) precursors GA9 and GA20 in the bioactives gibberellins GA4 and GA1. Involved in the production of bioactive GA for vegetative growth and development. This Arabidopsis thaliana (Mouse-ear cress) protein is Gibberellin 3-beta-dioxygenase 2.